The following is a 356-amino-acid chain: Carbohydrate sulfotransferase 10 (356 aa).

Residues 1-6 (MHHQWL) lie on the Cytoplasmic side of the membrane. The helical; Signal-anchor for type II membrane protein transmembrane segment at 7 to 27 (LLAACFWVIFMFMVASKFITL) threads the bilayer. The Lumenal segment spans residues 28 to 356 (TFKDPDGYSA…GYQKPDFLLN (329 aa)). N-linked (GlcNAc...) asparagine glycosylation is present at N99. 3'-phosphoadenylyl sulfate-binding positions include 127–133 (PKVGNTQ) and 189–197 (RDPFERLIS). N-linked (GlcNAc...) asparagine glycosylation is found at N228 and N316.

It belongs to the sulfotransferase 2 family.

Its subcellular location is the golgi apparatus membrane. It carries out the reaction 3-O-{beta-D-GlcA-(1-&gt;[3)-alpha-D-Xyl-(1-&gt;3)-beta-D-GlcA-(1-&gt;](n)-4)-beta-D-Xyl-(1-&gt;4)-Rib-ol-P-Rib-ol-P-3-beta-D-GalNAc-(1-&gt;3)-beta-D-GlcNAc-(1-&gt;4)-O-6-P-alpha-D-Man}-L-Thr-[protein] + 3'-phosphoadenylyl sulfate = 3-O-{O-3-S-beta-D-GlcA-(1-&gt;[3)-alpha-D-Xyl-(1-&gt;3)-beta-D-GlcA-(1-&gt;](n)-4)-beta-D-Xyl-(1-&gt;4)-Rib-ol-P-Rib-ol-P-3-beta-D-GalNAc-(1-&gt;3)-beta-D-GlcNAc-(1-&gt;4)-O-6-P-alpha-D-Man}-L-Thr-[protein] + adenosine 3',5'-bisphosphate + H(+). The catalysed reaction is 17beta-estradiol 3-O-(beta-D-glucuronate) + 3'-phosphoadenylyl sulfate = 17beta-estradiol 3-O-(3-sulfo-beta-D-glucuronate) + adenosine 3',5'-bisphosphate + H(+). It catalyses the reaction 17beta-estradiol 3-O-(beta-D-glucuronate) 17-sulfate + 3'-phosphoadenylyl sulfate = 17beta-estradiol 3-O-(3-sulfo-beta-D-glucuronate) 17-sulfate + adenosine 3',5'-bisphosphate + H(+). The enzyme catalyses 17beta-estradiol 17-O-(beta-D-glucuronate) + 3'-phosphoadenylyl sulfate = 17beta-estradiol 17-O-(3-sulfo-beta-D-glucuronate) + adenosine 3',5'-bisphosphate + H(+). It carries out the reaction 16alpha,17beta-estriol 3-O-(beta-D-glucuronate) + 3'-phosphoadenylyl sulfate = 16alpha,17beta-estriol 3-O-(3-sulfo-beta-D-glucuronate) + adenosine 3',5'-bisphosphate + H(+). The catalysed reaction is 16alpha,17beta-estriol 16-O-(beta-D-glucuronate) + 3'-phosphoadenylyl sulfate = 16alpha,17beta-estriol 16-O-(3-sulfo-beta-D-glucuronate) + adenosine 3',5'-bisphosphate + H(+). It catalyses the reaction 16alpha,17beta-estriol 17-O-(beta-D-glucuronate) + 3'-phosphoadenylyl sulfate = 16alpha,17beta-estriol 17-O-(3-sulfo-beta-D-glucuronate) + adenosine 3',5'-bisphosphate + H(+). The enzyme catalyses estrone 3-O-(beta-D-glucuronate) + 3'-phosphoadenylyl sulfate = estrone 3-O-(3-sulfo-beta-D-glucuronate) + adenosine 3',5'-bisphosphate + H(+). It carries out the reaction 3alpha,20alpha-dihydroxy-5beta-pregnane 3-O-(beta-D-glucuronate) + 3'-phosphoadenylyl sulfate = 3alpha,20alpha-dihydroxy-5beta-pregnane 3-O-(3-sulfo-beta-D-glucuronate) + adenosine 3',5'-bisphosphate + H(+). The catalysed reaction is testosterone 17-O-(beta-D-glucuronate) + 3'-phosphoadenylyl sulfate = testosterone 17-O-(3-sulfo-beta-D-glucuronate) + adenosine 3',5'-bisphosphate + H(+). It catalyses the reaction 3beta-androst-5-en-17-one 3-O-(beta-D-glucuronate) + 3'-phosphoadenylyl sulfate = 3beta-androst-5-en-17-one 3-O-(3-sulfo-beta-D-glucuronate) + adenosine 3',5'-bisphosphate + H(+). The enzyme catalyses 3alpha,17alpha-dihydroxy-5beta-androstane-11-one-17beta-carboxylate 3-O-(beta-D-glucuronate) + 3'-phosphoadenylyl sulfate = 3alpha,17alpha-dihydroxy-5beta-androstane-11-one-17beta-carboxylate 3-O-(3-sulfo-beta-D-glucuronate) + adenosine 3',5'-bisphosphate + H(+). It carries out the reaction 3alpha-hydroxyetiocholan-17-one 3-O-(beta-D-glucuronate) + 3'-phosphoadenylyl sulfate = 3alpha-hydroxyetiocholan-17-one 3-O-(3-sulfo-beta-D-glucuronate) + adenosine 3',5'-bisphosphate + H(+). It participates in steroid metabolism. It functions in the pathway protein modification; carbohydrate sulfation. In terms of biological role, catalyzes the transfer of sulfate from 3'-phosphoadenylyl sulfate (PAPS) to position 3 of terminal glucuronic acid of both protein- and lipid-linked oligosaccharides. Participates in biosynthesis of HNK-1 carbohydrate structure 3-O-sulfo-beta-D-GlcA-(1-&gt;3)-beta-D-Gal-(1-&gt;4)-D-GlcNAc-R, a sulfated glucuronyl-lactosaminyl residue carried by many neural recognition molecules, which is involved in cell interactions during ontogenetic development and in synaptic plasticity in the adult. May be indirectly involved in synapse plasticity of the hippocampus, via its role in HNK-1 biosynthesis. Sulfates terminal glucuronyl residue of the laminin globular (LG)-domain binding epitope on DAG1/alpha-dystroglycan and prevents further polymerization by LARGE1 glycosyltransferase. Likely defines the chain length of LG epitope, conferring binding specificity to extracellular matrix components. Plays a role in down-regulating the steroid hormones. Sulfates glucuronidated estrogens and androgens with an impact in hormone cycle and fertility. Has a preference for glucuronyl moiety at the 3-hydroxyl group of a sterol ring rather than the 17-hydroxyl group, showing high catalytic efficiency for 17beta-estradiol 3-O-(beta-D-glucuronate) and dehydroepiandrosterone 3-O-(beta-D-glucuronate) hormones. This is Carbohydrate sulfotransferase 10 from Mus musculus (Mouse).